A 1663-amino-acid chain; its full sequence is TPR repeat-containing protein DDB_G0287407 (1663 aa).

Disordered regions lie at residues 84–109 and 326–359; these read RKTQPTSSNGSTSTTTTTTTTTQKGQ and SEYSSTNDDGENDQSDDDDDNEDDDDFVEKNSNQ. The span at 89–105 shows a compositional bias: low complexity; that stretch reads TSSNGSTSTTTTTTTTT. Acidic residues predominate over residues 333–352; that stretch reads DDGENDQSDDDDDNEDDDDF. 6 TPR repeats span residues 1110–1143, 1150–1183, 1192–1225, 1234–1269, 1278–1311, and 1320–1353; these read SDVWFRVASFLEELSQFDGAEVLYNKCRELYINN, AKVDRAMGRMYLTMGQNDKSDSKFRLALSIYTKE, AITLNLLGTLATNRCKFDEAKQILNQAMNICESK, ADIAYSLGSVCFVEPNRKLEVAEAYFARSLELTESK, ARILTRLGSLNIEKDTYADAEAFFKAALKIYEAR, and SQILRHMISLYEVQENYKMAEQCCIRALAITKKI. 2 disordered regions span residues 1500–1528 and 1544–1571; these read VAQPTSFNSPVQPPSPRTQQAIQQGQQQR and QKVSSLQQQPQQQQQQQPSQGYGNRQNT. Residues 1516-1547 adopt a coiled-coil conformation; it reads RTQQAIQQGQQQRQQVQQQQQQVQQQMSQKVS. Low complexity-rich tracts occupy residues 1518–1528 and 1544–1563; these read QQAIQQGQQQR and QKVSSLQQQPQQQQQQQPSQ.

The chain is TPR repeat-containing protein DDB_G0287407 from Dictyostelium discoideum (Social amoeba).